The sequence spans 231 residues: Uracil-DNA glycosylase (231 aa).

Aspartate 74 serves as the catalytic Proton acceptor.

Belongs to the uracil-DNA glycosylase (UDG) superfamily. UNG family.

The protein resides in the cytoplasm. The enzyme catalyses Hydrolyzes single-stranded DNA or mismatched double-stranded DNA and polynucleotides, releasing free uracil.. Excises uracil residues from the DNA which can arise as a result of misincorporation of dUMP residues by DNA polymerase or due to deamination of cytosine. This chain is Uracil-DNA glycosylase, found in Campylobacter jejuni subsp. jejuni serotype O:6 (strain 81116 / NCTC 11828).